We begin with the raw amino-acid sequence, 728 residues long: FAS1 domain-containing protein fsc1 (728 aa).

The N-terminal stretch at 1–21 (MNLQFRLYLLFILLFISFANG) is a signal peptide. Residues 22-670 (KNEYEDKSTS…TKRQNRWRIT (649 aa)) are Vacuolar-facing. FAS1 domains are found at residues 29–151 (STSI…DNII) and 154–285 (PPPA…SSLI). An N-linked (GlcNAc...) asparagine glycan is attached at Asn-89. N-linked (GlcNAc...) asparagine glycans are attached at residues Asn-404 and Asn-501. A helical membrane pass occupies residues 671–691 (FISISGLLLSVGICVLCYKIY). Over 692 to 728 (FKFFRNRFMNQGEREPLLAPADSDTMAGRRNSSSLSV) the chain is Cytoplasmic.

It is found in the vacuole membrane. Functionally, required for the fusion of autophagosomes with the vacuole. The protein is FAS1 domain-containing protein fsc1 (fsc1) of Schizosaccharomyces pombe (strain 972 / ATCC 24843) (Fission yeast).